Reading from the N-terminus, the 747-residue chain is Polyribonucleotide nucleotidyltransferase (747 aa).

2 residues coordinate Mg(2+): Asp487 and Asp493. The KH domain maps to Pro554–Ile613. An S1 motif domain is found at Gly623–Lys691. A disordered region spans residues Asp694–Glu716. The segment covering Leu699–Lys712 has biased composition (polar residues).

The protein belongs to the polyribonucleotide nucleotidyltransferase family. Requires Mg(2+) as cofactor.

It is found in the cytoplasm. The enzyme catalyses RNA(n+1) + phosphate = RNA(n) + a ribonucleoside 5'-diphosphate. Involved in mRNA degradation. Catalyzes the phosphorolysis of single-stranded polyribonucleotides processively in the 3'- to 5'-direction. The protein is Polyribonucleotide nucleotidyltransferase of Rickettsia canadensis (strain McKiel).